The sequence spans 1252 residues: LRR receptor-like serine/threonine-protein kinase GSO2 (1252 aa).

Positions 1–22 (MQQNSVLLALFFLCFSSGLGSG) are cleaved as a signal peptide. Residues 23 to 876 (QPGQRDDLQT…QRSLSPKTVV (854 aa)) are Extracellular-facing. N-linked (GlcNAc...) asparagine glycosylation is found at asparagine 62, asparagine 77, and asparagine 117. 10 LRR repeats span residues 94-118 (FNNL…LSNL), 120-143 (SSLE…LGSL), 144-166 (VNLK…TFGN), 168-190 (VNLQ…RFGR), 191-215 (LVQL…IGNC), 217-239 (SLAL…LNRL), 240-263 (KNLQ…LGDL), 265-286 (SIQY…RLTE), 287-310 (LANL…EFWR), and 312-335 (NQLE…ICSN). Asparagine 157 carries N-linked (GlcNAc...) asparagine glycosylation. N-linked (GlcNAc...) asparagine glycans are attached at residues asparagine 214 and asparagine 229. Residue asparagine 299 is glycosylated (N-linked (GlcNAc...) asparagine). A glycan (N-linked (GlcNAc...) asparagine) is linked at asparagine 336. 21 LRR repeats span residues 337 to 360 (TSLK…ISNC), 361 to 384 (QSLK…LFQL), 386 to 408 (ELTN…ISNL), 409 to 433 (TNLQ…GFLG), 435 to 456 (LEIM…IGNC), 457 to 480 (TRLQ…IGRL), 481 to 504 (KDLT…LGNC), 506 to 528 (QMTV…FGFL), 529 to 552 (TALE…LINL), 554 to 575 (NLTR…LCGS), 577 to 599 (SYLS…LGKS), 600 to 622 (TNLD…TFGK), 623 to 648 (ISEL…GLCK), 650 to 670 (LTHI…WLGK), 671 to 695 (LPLL…IFSL), 697 to 719 (NILT…IGNL), 720 to 743 (QALN…IGKL), 745 to 767 (KLFE…IGQL), 768 to 792 (QDLQ…ISTL), 793 to 816 (PKLE…IGDM), and 818 to 839 (SLGY…QFSR). Residues asparagine 370, asparagine 394, and asparagine 407 are each glycosylated (N-linked (GlcNAc...) asparagine). N-linked (GlcNAc...) asparagine glycosylation is present at asparagine 455. Residues asparagine 538, asparagine 554, asparagine 559, and asparagine 566 are each glycosylated (N-linked (GlcNAc...) asparagine). Asparagine 709 carries an N-linked (GlcNAc...) asparagine glycan. N-linked (GlcNAc...) asparagine glycosylation is present at asparagine 780. Residue asparagine 823 is glycosylated (N-linked (GlcNAc...) asparagine). Residues 877-897 (IISAISSLAAIALMVLVIILF) traverse the membrane as a helical segment. Topologically, residues 898-1252 (FKQNHDLFKK…YREMQTDTDK (355 aa)) are cytoplasmic. Position 945 is a phosphothreonine (threonine 945). The Protein kinase domain maps to 948–1232 (LNEEFMIGSG…PSSRQASEYL (285 aa)). ATP is bound by residues 954 to 962 (IGSGGSGKV) and lysine 976. Residues tyrosine 1024 and tyrosine 1066 each carry the phosphotyrosine modification. Catalysis depends on aspartate 1079, which acts as the Proton acceptor. Serine 1114 carries the post-translational modification Phosphoserine. Phosphotyrosine is present on residues tyrosine 1124 and tyrosine 1131.

It belongs to the protein kinase superfamily. Ser/Thr protein kinase family. As to quaternary structure, interacts with CIF1 and CIF2. Mostly expressed in siliques, seeds, developing embryos and seedlings, detected in flower buds, but not in roots, leaves or stems.

Its subcellular location is the cell membrane. The enzyme catalyses L-seryl-[protein] + ATP = O-phospho-L-seryl-[protein] + ADP + H(+). It carries out the reaction L-threonyl-[protein] + ATP = O-phospho-L-threonyl-[protein] + ADP + H(+). Functionally, together with GSO1, receptor-like serine/threonine-kinase required during the development of the epidermal surface in embryos and cotyledons. Involved in the nuclear division phase of megagametogenesis. In coordination with GSO2, regulates root growth through control of cell division and cell fate specification. Controls seedling root growth by modulating sucrose response after germination. Receptor of the peptide hormones CIF1 and CIF2 required for contiguous Casparian strip diffusion barrier formation in roots. This chain is LRR receptor-like serine/threonine-protein kinase GSO2, found in Arabidopsis thaliana (Mouse-ear cress).